Reading from the N-terminus, the 200-residue chain is NADH-quinone oxidoreductase subunit C (200 aa).

This sequence belongs to the complex I 30 kDa subunit family. As to quaternary structure, NDH-1 is composed of 14 different subunits. Subunits NuoB, C, D, E, F, and G constitute the peripheral sector of the complex.

It is found in the cell inner membrane. It catalyses the reaction a quinone + NADH + 5 H(+)(in) = a quinol + NAD(+) + 4 H(+)(out). In terms of biological role, NDH-1 shuttles electrons from NADH, via FMN and iron-sulfur (Fe-S) centers, to quinones in the respiratory chain. The immediate electron acceptor for the enzyme in this species is believed to be ubiquinone. Couples the redox reaction to proton translocation (for every two electrons transferred, four hydrogen ions are translocated across the cytoplasmic membrane), and thus conserves the redox energy in a proton gradient. The sequence is that of NADH-quinone oxidoreductase subunit C from Agrobacterium fabrum (strain C58 / ATCC 33970) (Agrobacterium tumefaciens (strain C58)).